Reading from the N-terminus, the 80-residue chain is Defensin-like protein 17 (80 aa).

A signal peptide spans 1–29; sequence MAKSATIITFLFAALVLFAAFEAPTMVEA. Position 30 is a pyrrolidone carboxylic acid (Q30). 4 disulfide bridges follow: C33–C80, C44–C65, C50–C74, and C54–C76.

The protein belongs to the DEFL family.

Its subcellular location is the secreted. Functionally, confers broad-spectrum resistance to pathogens. This Arabidopsis thaliana (Mouse-ear cress) protein is Defensin-like protein 17 (PDF1.2C).